The primary structure comprises 358 residues: Gibberellin 2-beta-dioxygenase 6 (358 aa).

A Fe2OG dioxygenase domain is found at 207-308 (DETTCFLRLN…RLSVAYFLCP (102 aa)). Tyr-218 is a 2-oxoglutarate binding site. Fe cation is bound by residues His-233, Asp-235, and His-289. 2 residues coordinate 2-oxoglutarate: Arg-299 and Ser-301.

Belongs to the iron/ascorbate-dependent oxidoreductase family. GA2OX subfamily. Requires L-ascorbate as cofactor. It depends on Fe(2+) as a cofactor. In terms of tissue distribution, expressed in panicles. Expressed at low levels in young shoots, leaf blades and elongating internodes.

Its subcellular location is the cytoplasm. It is found in the nucleus. The catalysed reaction is gibberellin A1 + 2-oxoglutarate + O2 = gibberellin A8 + succinate + CO2. Catalyzes the 2-beta-hydroxylation of several biologically active gibberellins, leading to the homeostatic regulation of their endogenous level. Catabolism of gibberellins (GAs) plays a central role in plant development. In vitro, converts GA12 and GA53 to the corresponding 2-beta-hydroxylated products GA110 and GA97, respectively. The chain is Gibberellin 2-beta-dioxygenase 6 from Oryza sativa subsp. japonica (Rice).